Here is a 49-residue protein sequence, read N- to C-terminus: Large ribosomal subunit protein bL33A (49 aa).

This sequence belongs to the bacterial ribosomal protein bL33 family.

The chain is Large ribosomal subunit protein bL33A (rpmG1) from Enterococcus faecalis (strain ATCC 700802 / V583).